We begin with the raw amino-acid sequence, 248 residues long: Probable transcriptional regulatory protein Atu3727 (248 aa).

Residues 1–21 (MAGHSQFKNIMHRKGKQDSVR) are disordered.

This sequence belongs to the TACO1 family.

Its subcellular location is the cytoplasm. In Agrobacterium fabrum (strain C58 / ATCC 33970) (Agrobacterium tumefaciens (strain C58)), this protein is Probable transcriptional regulatory protein Atu3727.